Reading from the N-terminus, the 202-residue chain is MSYLGVGVSPGNVPVYHGMNLKVIDRRVRLAELVLRCVICALGVLAAVLVGTDTQVKEIFSIQKKARFTDMKALVFLVVANGIAAAYSLVQGVRCVVGMVKGSVLFSKPLAWVIFSGDQMMAYLTLSAVAAAVQSASFAKLGQPDLQWMKICNMYGKFCNQVGEGIASALLVSVSMVVLSCISSFSLFRLYGGNKGKDGARW.

Topologically, residues 1–29 are cytoplasmic; the sequence is MSYLGVGVSPGNVPVYHGMNLKVIDRRVR. A helical membrane pass occupies residues 30–50; it reads LAELVLRCVICALGVLAAVLV. Topologically, residues 51–72 are extracellular; the sequence is GTDTQVKEIFSIQKKARFTDMK. A helical membrane pass occupies residues 73–93; that stretch reads ALVFLVVANGIAAAYSLVQGV. The Cytoplasmic segment spans residues 94–118; the sequence is RCVVGMVKGSVLFSKPLAWVIFSGD. Residues 119–139 traverse the membrane as a helical segment; sequence QMMAYLTLSAVAAAVQSASFA. Over 140–164 the chain is Extracellular; it reads KLGQPDLQWMKICNMYGKFCNQVGE. The helical transmembrane segment at 165–185 threads the bilayer; sequence GIASALLVSVSMVVLSCISSF. The Cytoplasmic segment spans residues 186–202; sequence SLFRLYGGNKGKDGARW.

It belongs to the Casparian strip membrane proteins (CASP) family. As to quaternary structure, homodimer and heterodimers.

Its subcellular location is the cell membrane. In Populus trichocarpa (Western balsam poplar), this protein is CASP-like protein 2B2.